The sequence spans 430 residues: L-lysine N6-monooxygenase MbtG (430 aa).

The signal sequence occupies residues 1-21 (MTATLAVIGAGPKAVAVAAKA).

It belongs to the lysine N(6)-hydroxylase/L-ornithine N(5)-oxygenase family. Requires FAD as cofactor.

It catalyses the reaction L-lysine + NADPH + O2 = N(6)-hydroxy-L-lysine + NADP(+) + H2O. Its pathway is siderophore biosynthesis; mycobactin biosynthesis. Functionally, flavoprotein monooxygenase required for N-hydroxylation of the two acylated lysine residues during mycobactin assembly, thus producing the hydroxamate groups necessary for iron sequestration. Is also able, but less efficiently, to hydroxylate L-lysine (non acylated) in vitro. The polypeptide is L-lysine N6-monooxygenase MbtG (mbtG) (Mycobacterium sp. (strain MCS)).